We begin with the raw amino-acid sequence, 175 residues long: NADH-ubiquinone oxidoreductase chain 6 (175 aa).

5 helical membrane passes run M1–S21, S25–M45, F47–V67, T88–F108, and Y149–L169.

It belongs to the complex I subunit 6 family. In terms of assembly, core subunit of respiratory chain NADH dehydrogenase (Complex I) which is composed of 45 different subunits.

The protein resides in the mitochondrion inner membrane. The enzyme catalyses a ubiquinone + NADH + 5 H(+)(in) = a ubiquinol + NAD(+) + 4 H(+)(out). In terms of biological role, core subunit of the mitochondrial membrane respiratory chain NADH dehydrogenase (Complex I) which catalyzes electron transfer from NADH through the respiratory chain, using ubiquinone as an electron acceptor. Essential for the catalytic activity and assembly of complex I. This Rhinoceros unicornis (Greater Indian rhinoceros) protein is NADH-ubiquinone oxidoreductase chain 6 (MT-ND6).